The chain runs to 362 residues: Peptide chain release factor 1 (362 aa).

An N5-methylglutamine modification is found at Q236.

The protein belongs to the prokaryotic/mitochondrial release factor family. Methylated by PrmC. Methylation increases the termination efficiency of RF1.

The protein localises to the cytoplasm. Functionally, peptide chain release factor 1 directs the termination of translation in response to the peptide chain termination codons UAG and UAA. The polypeptide is Peptide chain release factor 1 (Lactobacillus johnsonii (strain CNCM I-12250 / La1 / NCC 533)).